We begin with the raw amino-acid sequence, 617 residues long: MLKTVTTAMAAGDDDVPASILEIELPAILLNESLFIELNGNLTQLVDTTSNLSQIVWNRSINGNGNSNTFDLVDDEQERAAVEFWLLVKMIAMAVVLGLMILVTIIGNVFVIAAIILERNLQNVANYLVASLAVADLFVACLVMPLGAVYEISNGWILGPELCDIWTSCDVLCCTASILHLVAIAADRYWTVTNIDYNNLRTPRRVFLMIFCVWFAALIVSLAPQFGWKDPDYMKRIEEQHCMVSQDVGYQIFATCCTFYVPLLVILFLYWKIYIIARKRIQRRAQKSFNVTLTETDCDSAVRELKKERSKRRAERKRLEAGERTPVDGDGTGGQLQRRTRKRMRICFGRNTNTANVVAGSEGAVARSMAAIAVDFASLAITREETEFSTSNYDNKSHAGTELTTVSSDADDYRTSNANEIITLSQQVAHATQHHLIASHLNAITPLAQSIAMGGVGCLTTTTPSEKALSGAGTVAGAVAGGSGSGSGEEGAGTEGKNAGVGLGGVLASIANPHQKLAKRRQLLEAKRERKAAQTLAIITGAFVICWLPFFVMALTMSLCKECEIHTAVASLFLWLGYFNSTLNPVIYTIFNPEFRRAFKRILFGRKAAARARSAKI.

The Extracellular segment spans residues 1-95 (MLKTVTTAMA…LLVKMIAMAV (95 aa)). 4 N-linked (GlcNAc...) asparagine glycosylation sites follow: Asn-31, Asn-41, Asn-51, and Asn-58. Residues 96 to 116 (VLGLMILVTIIGNVFVIAAII) traverse the membrane as a helical segment. Over 117–128 (LERNLQNVANYL) the chain is Cytoplasmic. Residues 129–149 (VASLAVADLFVACLVMPLGAV) traverse the membrane as a helical segment. Topologically, residues 150–164 (YEISNGWILGPELCD) are extracellular. A disulfide bridge links Cys-163 with Cys-242. The chain crosses the membrane as a helical span at residues 165 to 185 (IWTSCDVLCCTASILHLVAIA). At 186-205 (ADRYWTVTNIDYNNLRTPRR) the chain is on the cytoplasmic side. A helical membrane pass occupies residues 206 to 226 (VFLMIFCVWFAALIVSLAPQF). At 227–256 (GWKDPDYMKRIEEQHCMVSQDVGYQIFATC) the chain is on the extracellular side. The chain crosses the membrane as a helical span at residues 257-277 (CTFYVPLLVILFLYWKIYIIA). Residues 278-534 (RKRIQRRAQK…EAKRERKAAQ (257 aa)) are Cytoplasmic-facing. Positions 309 to 336 (RSKRRAERKRLEAGERTPVDGDGTGGQL) are disordered. The span at 317–327 (KRLEAGERTPV) shows a compositional bias: basic and acidic residues. Residues 535-555 (TLAIITGAFVICWLPFFVMAL) traverse the membrane as a helical segment. Residues 556-570 (TMSLCKECEIHTAVA) lie on the Extracellular side of the membrane. Residues 571–591 (SLFLWLGYFNSTLNPVIYTIF) traverse the membrane as a helical segment. At 592 to 617 (NPEFRRAFKRILFGRKAAARARSAKI) the chain is on the cytoplasmic side.

The protein belongs to the G-protein coupled receptor 1 family.

Its subcellular location is the cell membrane. Its function is as follows. This is one of the several different receptors for 5-hydroxytryptamine (serotonin), a biogenic hormone that functions as a neurotransmitter, a hormone, and a mitogen. The activity of this receptor is mediated by G proteins which inhibit adenylate cyclase. The polypeptide is 5-hydroxytryptamine receptor 2B (5-HT1B) (Drosophila melanogaster (Fruit fly)).